Reading from the N-terminus, the 838-residue chain is Envelope glycoprotein H (838 aa).

A signal peptide spans 1–18 (MGNGLWFVGVIILGAAWG). Over 19–803 (QVHDWTEQTD…DTQPVAAIAP (785 aa)) the chain is Virion surface. N73 and N120 each carry an N-linked (GlcNAc...) asparagine; by host glycan. Residues 174–204 (FPRGDNVATASHPSGPRDTPPPRPPVGARRH) are disordered. A glycan (N-linked (GlcNAc...) asparagine; by host) is linked at N216. Positions 259–323 (DAALVRARYG…PGGPRYRVFV (65 aa)) are interaction with gL. N332, N437, N670, and N784 each carry an N-linked (GlcNAc...) asparagine; by host glycan. The chain crosses the membrane as a helical span at residues 804-824 (GFLAASALGVVMITAALAGIL). At 825–838 (KVLRTSVPFFWRRE) the chain is on the intravirion side.

It belongs to the herpesviridae glycoprotein H family. Interacts with glycoprotein L (gL); this interaction is necessary for the correct processing and cell surface expression of gH. The heterodimer gH/gL seems to interact with gB trimers during fusion. Post-translationally, N-glycosylated, O-glycosylated, and sialylated.

Its subcellular location is the virion membrane. It is found in the host cell membrane. It localises to the host endosome membrane. Its function is as follows. The heterodimer glycoprotein H-glycoprotein L is required for the fusion of viral and plasma membranes leading to virus entry into the host cell. Following initial binding to host receptor, membrane fusion is mediated by the fusion machinery composed of gB and the heterodimer gH/gL. May also be involved in the fusion between the virion envelope and the outer nuclear membrane during virion morphogenesis. This chain is Envelope glycoprotein H, found in Homo sapiens (Human).